A 201-amino-acid polypeptide reads, in one-letter code: MELVLKDAQSALEVSEATFGRDFNEALVHQVVVAYAANARQGTRAQKTRAEVTGSGKKPWRQKGTGRARAGTVKGPIWRGGGVTFAAKTQDHSQKVNKKMYRGALKSIFSELVRQDRLIVVESFGVDAPKTKELKAKLDAMQLQDVLIVTPEVDENLFLAARNLYKVDVRDVAGVDPVSLIAFDKVLVTAEAIKQIEEMLG.

The segment at 45–71 is disordered; the sequence is AQKTRAEVTGSGKKPWRQKGTGRARAG.

Belongs to the universal ribosomal protein uL4 family. As to quaternary structure, part of the 50S ribosomal subunit.

Functionally, one of the primary rRNA binding proteins, this protein initially binds near the 5'-end of the 23S rRNA. It is important during the early stages of 50S assembly. It makes multiple contacts with different domains of the 23S rRNA in the assembled 50S subunit and ribosome. Forms part of the polypeptide exit tunnel. This is Large ribosomal subunit protein uL4 from Shewanella halifaxensis (strain HAW-EB4).